The primary structure comprises 416 residues: Enterobactin exporter EntS (416 aa).

Over 1-21 the chain is Cytoplasmic; sequence MNKQSWLLNLSLLKTHPAFRA. The chain crosses the membrane as a helical span at residues 22 to 42; that stretch reads VFLARFISIVSLGLLGVAVPV. Over 43–55 the chain is Periplasmic; the sequence is QIQMMTHSTWQVG. Residues 56–76 traverse the membrane as a helical segment; that stretch reads LSVTLTGGAMFVGLMVGGVLA. Topologically, residues 77 to 83 are cytoplasmic; it reads DRYERKK. A helical transmembrane segment spans residues 84–104; that stretch reads VILLARGTCGIGFIGLCLNAL. The Periplasmic segment spans residues 105 to 109; the sequence is LPEPS. The helical transmembrane segment at 110–130 threads the bilayer; that stretch reads LLAIYLLGLWDGFFASLGVTA. Residues 131 to 156 lie on the Cytoplasmic side of the membrane; it reads LLAATPALVGRENLMQAGAITMLTVR. The chain crosses the membrane as a helical span at residues 157 to 177; sequence LGSVISPMIGGLLLATGGVAW. N178 is a topological domain (periplasmic). Residues 179–199 traverse the membrane as a helical segment; it reads YGLAAAGTFITLLPLLSLPAL. Residues 200-218 lie on the Cytoplasmic side of the membrane; sequence PPPPQPREHPLKSLLAGFR. Residues 219–239 form a helical membrane-spanning segment; that stretch reads FLLASPLVGGIALLGGLLTMA. Residues 240-256 are Periplasmic-facing; that stretch reads SAVRVLYPALADNWQMS. Residues 257 to 277 traverse the membrane as a helical segment; it reads AAQIGFLYAAIPLGAAIGALT. Residues 278–287 are Cytoplasmic-facing; sequence SGKLAHSVRP. Residues 288-307 traverse the membrane as a helical segment; sequence GLLMLLSTLGAFLAIGLFGL. Topologically, residues 308–313 are periplasmic; the sequence is MPMWIL. The chain crosses the membrane as a helical span at residues 314-336; the sequence is GVVCLALFGWLSAVSSLLQYTML. Residues 337-356 lie on the Cytoplasmic side of the membrane; that stretch reads QTQTPEAMLGRINGLWTAQN. The helical transmembrane segment at 357 to 377 threads the bilayer; that stretch reads VTGDAIGAALLGGLGAMMTPV. Residue A378 is a topological domain, periplasmic. Residues 379–399 traverse the membrane as a helical segment; the sequence is SASASGFGLLIIGVLLLLVLV. Over 400 to 416 the chain is Cytoplasmic; it reads ELRRFRQTPPQVTASGS.

This sequence belongs to the major facilitator superfamily. EntS (TC 2.A.1.38) family.

Its subcellular location is the cell inner membrane. Its function is as follows. Component of an export pathway for enterobactin. This chain is Enterobactin exporter EntS, found in Escherichia coli O6:K15:H31 (strain 536 / UPEC).